A 104-amino-acid polypeptide reads, in one-letter code: uncharacterized protein (104 aa).

This is an uncharacterized protein from Mycoplasma genitalium (strain ATCC 33530 / DSM 19775 / NCTC 10195 / G37) (Mycoplasmoides genitalium).